The primary structure comprises 275 residues: Tryptase (275 aa).

An N-terminal signal peptide occupies residues 1-20 (MLNLLVLALPLLVSLVHTAP). A propeptide spans 21–30 (APGQALERAG) (activation peptide). The 242-residue stretch at 31–272 (IVGGKEAPGH…YLDWIHQCIP (242 aa)) folds into the Peptidase S1 domain. C59 and C75 form a disulfide bridge. Residues H74 and D121 each act as charge relay system in the active site. An N-linked (GlcNAc...) asparagine glycan is attached at N132. 3 cysteine pairs are disulfide-bonded: C155–C230, C188–C211, and C220–C248. Residue S224 is the Charge relay system of the active site. An N-linked (GlcNAc...) asparagine glycan is attached at N233.

This sequence belongs to the peptidase S1 family. Tryptase subfamily. As to quaternary structure, homotetramer.

Its subcellular location is the secreted. It carries out the reaction Preferential cleavage: Arg-|-Xaa, Lys-|-Xaa, but with more restricted specificity than trypsin.. Its function is as follows. Tryptase is the major neutral protease present in mast cells and is secreted upon the coupled activation-degranulation response of this cell type. This is Tryptase (MCT7) from Sus scrofa (Pig).